We begin with the raw amino-acid sequence, 166 residues long: Lipoprotein signal peptidase (166 aa).

4 consecutive transmembrane segments (helical) span residues 11-31 (VWLWLSLLLLVVDFASKTLVV), 42-62 (LLPVFSITYVHNYGAAYSFLS), 67-87 (WQRWFLSAIAIAISGLLVWWL), and 90-110 (LPATNKVLCAAYSLVLAGAIG). Catalysis depends on residues Asp123 and Asp141. A helical membrane pass occupies residues 133-153 (HFPVFNVADCAICIGAALLLF).

This sequence belongs to the peptidase A8 family.

It is found in the cell inner membrane. The enzyme catalyses Release of signal peptides from bacterial membrane prolipoproteins. Hydrolyzes -Xaa-Yaa-Zaa-|-(S,diacylglyceryl)Cys-, in which Xaa is hydrophobic (preferably Leu), and Yaa (Ala or Ser) and Zaa (Gly or Ala) have small, neutral side chains.. The protein operates within protein modification; lipoprotein biosynthesis (signal peptide cleavage). In terms of biological role, this protein specifically catalyzes the removal of signal peptides from prolipoproteins. In Pseudoalteromonas translucida (strain TAC 125), this protein is Lipoprotein signal peptidase.